The chain runs to 830 residues: Periplasmic nitrate reductase (830 aa).

Residues 1–31 (MKLSRRDFMKANAAVAAAAAAGMTIPTVAKA) constitute a signal peptide (tat-type signal). The 4Fe-4S Mo/W bis-MGD-type domain occupies 39 to 95 (IKWDKAPCRFCGTGCGVLVGTQNGRIVASQGDPDSPVNRGLNCIKGYFLPKIMYGKD). 4 residues coordinate [4Fe-4S] cluster: C46, C49, C53, and C81. Mo-bis(molybdopterin guanine dinucleotide) is bound by residues K83, Q150, N175, C179, 212 to 219 (WGSNMAEM), 243 to 247 (STYEH), 262 to 264 (QTD), M372, Q376, N482, 508 to 509 (SD), K531, D558, and 718 to 727 (TGRVLEHWHT). F794 serves as a coordination point for substrate. Residues N802 and K819 each contribute to the Mo-bis(molybdopterin guanine dinucleotide) site.

This sequence belongs to the prokaryotic molybdopterin-containing oxidoreductase family. NasA/NapA/NarB subfamily. Component of the periplasmic nitrate reductase NapAB complex composed of NapA and NapB. [4Fe-4S] cluster is required as a cofactor. The cofactor is Mo-bis(molybdopterin guanine dinucleotide). Post-translationally, predicted to be exported by the Tat system. The position of the signal peptide cleavage has not been experimentally proven.

The protein resides in the periplasm. The catalysed reaction is 2 Fe(II)-[cytochrome] + nitrate + 2 H(+) = 2 Fe(III)-[cytochrome] + nitrite + H2O. Its function is as follows. Catalytic subunit of the periplasmic nitrate reductase complex NapAB. Receives electrons from NapB and catalyzes the reduction of nitrate to nitrite. The chain is Periplasmic nitrate reductase from Yersinia pseudotuberculosis serotype IB (strain PB1/+).